A 335-amino-acid polypeptide reads, in one-letter code: Endo-beta-N-acetylglucosaminidase F2 (335 aa).

The first 45 residues, 1–45 (MKTANFSFALCLSVVIMLFIKCTRSEQDLSVTKDAIAQKSGVTVS), serve as a signal peptide directing secretion. The region spanning 61-321 (QISAGYYRTW…SSNDNTLRAP (261 aa)) is the GH18 domain. Residues Ser-73, Ser-89, and Ser-143 are each glycosylated (O-linked (Man...) serine). The Proton donor role is filled by Glu-171.

The protein belongs to the glycosyl hydrolase 18 family. As to quaternary structure, monomer. Carbohydrates at Ser-73, Ser-89 and Ser-143 consist of (2-OMe)Man1-4GlcNAcU1-4GlcU1-4Glc1-4(2-OMe)GlcU1-4[(2-OMe)Rham1-2]Man.

It is found in the secreted. The catalysed reaction is an N(4)-(oligosaccharide-(1-&gt;3)-[oligosaccharide-(1-&gt;6)]-beta-D-Man-(1-&gt;4)-beta-D-GlcNAc-(1-&gt;4)-alpha-D-GlcNAc)-L-asparaginyl-[protein] + H2O = an oligosaccharide-(1-&gt;3)-[oligosaccharide-(1-&gt;6)]-beta-D-Man-(1-&gt;4)-D-GlcNAc + N(4)-(N-acetyl-beta-D-glucosaminyl)-L-asparaginyl-[protein]. In terms of biological role, endohydrolysis of the di-N-acetylchitobiosyl unit in high-mannose glycopeptides and glycoproteins. Complex biantennary glycans are the preferred substrates. Tri- and tetraantennary glycans are not hydrolyzed, and high mannose glycans are very poor substrates. This Elizabethkingia meningoseptica (Chryseobacterium meningosepticum) protein is Endo-beta-N-acetylglucosaminidase F2 (endOF2).